Here is a 1297-residue protein sequence, read N- to C-terminus: Phosphoribosylformylglycinamidine synthase (1297 aa).

The disordered stretch occupies residues 304–323; that stretch reads PFPGAATGSGGEIRDEGATG. ATP is bound by residues 307 to 318 and Ala-678; that span reads GAATGSGGEIRD. 4 residues coordinate Mg(2+): Asp-679, Glu-718, Asn-722, and Asp-886. ATP is bound at residue Ser-888. The region spanning 1043–1297 is the Glutamine amidotransferase type-1 domain; it reads RIAILREQGV…LFQNARVALG (255 aa). The active-site Nucleophile is the Cys-1137. Active-site residues include His-1262 and Glu-1264.

This sequence in the N-terminal section; belongs to the FGAMS family. Monomer.

The protein resides in the cytoplasm. It carries out the reaction N(2)-formyl-N(1)-(5-phospho-beta-D-ribosyl)glycinamide + L-glutamine + ATP + H2O = 2-formamido-N(1)-(5-O-phospho-beta-D-ribosyl)acetamidine + L-glutamate + ADP + phosphate + H(+). Its pathway is purine metabolism; IMP biosynthesis via de novo pathway; 5-amino-1-(5-phospho-D-ribosyl)imidazole from N(2)-formyl-N(1)-(5-phospho-D-ribosyl)glycinamide: step 1/2. In terms of biological role, phosphoribosylformylglycinamidine synthase involved in the purines biosynthetic pathway. Catalyzes the ATP-dependent conversion of formylglycinamide ribonucleotide (FGAR) and glutamine to yield formylglycinamidine ribonucleotide (FGAM) and glutamate. This chain is Phosphoribosylformylglycinamidine synthase, found in Histophilus somni (strain 129Pt) (Haemophilus somnus).